A 32-amino-acid polypeptide reads, in one-letter code: MSDIN-like toxin proprotein 1 (32 aa).

Residues 1–10 (MSDINVTRLP) constitute a propeptide that is removed on maturation. The cyclopeptide (Gly-Pro) cross-link spans 11-18 (GFVPILFP). The propeptide occupies 19–32 (CVGDDVNTALTRGE).

It belongs to the MSDIN fungal toxin family. Post-translationally, processed by the macrocyclase-peptidase enzyme POPB to yield a toxic cyclic octapeptide. POPB first removes 10 residues from the N-terminus. Conformational trapping of the remaining peptide forces the enzyme to release this intermediate rather than proceed to macrocyclization. The enzyme rebinds the remaining peptide in a different conformation and catalyzes macrocyclization of the N-terminal 8 residues.

In terms of biological role, probable toxin that belongs to the MSDIN-like toxin family responsible for a large number of food poisoning cases and deaths. This Amanita bisporigera (Destroying angel) protein is MSDIN-like toxin proprotein 1.